Here is a 272-residue protein sequence, read N- to C-terminus: Large ribosomal subunit protein uL29m (272 aa).

3 disordered regions span residues 1 to 29 (MAAAAMRPSMGALGRISSSTPSPLRPLTQ), 56 to 87 (KHRGESAIHRSGTRWRLSMSDEPLPRPVPRNK), and 227 to 272 (AAAT…TPRL). Residues 17–29 (SSSTPSPLRPLTQ) are compositionally biased toward low complexity. 2 stretches are compositionally biased toward low complexity: residues 227–238 (AAATEGEQQAAE) and 249–259 (PATAATPESAT). Residues 260–272 (IPSSQQQTDTPRL) are compositionally biased toward polar residues.

Belongs to the universal ribosomal protein uL29 family. In terms of assembly, component of the mitochondrial large ribosomal subunit. Mature mitochondrial ribosomes consist of a small (37S) and a large (54S) subunit. The 37S subunit contains at least 33 different proteins and 1 molecule of RNA (15S). The 54S subunit contains at least 45 different proteins and 1 molecule of RNA (21S).

It localises to the mitochondrion. The chain is Large ribosomal subunit protein uL29m (MRPL4) from Chaetomium globosum (strain ATCC 6205 / CBS 148.51 / DSM 1962 / NBRC 6347 / NRRL 1970) (Soil fungus).